The primary structure comprises 225 residues: Ribosome maturation factor RimM (225 aa).

The PRC barrel domain occupies 144-225 (ADEFYWVDLI…RIVVDWEADY (82 aa)).

The protein belongs to the RimM family. In terms of assembly, binds ribosomal protein uS19.

It localises to the cytoplasm. Its function is as follows. An accessory protein needed during the final step in the assembly of 30S ribosomal subunit, possibly for assembly of the head region. Essential for efficient processing of 16S rRNA. May be needed both before and after RbfA during the maturation of 16S rRNA. It has affinity for free ribosomal 30S subunits but not for 70S ribosomes. This Burkholderia orbicola (strain AU 1054) protein is Ribosome maturation factor RimM.